Here is a 145-residue protein sequence, read N- to C-terminus: Large ribosomal subunit protein uL15 (145 aa).

Residues M1–T52 form a disordered region. The segment covering R19 to Q33 has biased composition (gly residues).

The protein belongs to the universal ribosomal protein uL15 family. In terms of assembly, part of the 50S ribosomal subunit.

Binds to the 23S rRNA. The polypeptide is Large ribosomal subunit protein uL15 (Borreliella burgdorferi (strain ATCC 35210 / DSM 4680 / CIP 102532 / B31) (Borrelia burgdorferi)).